Reading from the N-terminus, the 431-residue chain is Adenylosuccinate lyase (431 aa).

N(6)-(1,2-dicarboxyethyl)-AMP contacts are provided by residues 4 to 5 (RY), 67 to 69 (NHD), and 93 to 94 (TS). Residue His141 is the Proton donor/acceptor of the active site. N(6)-(1,2-dicarboxyethyl)-AMP is bound at residue Gln212. The active-site Proton donor/acceptor is Ser262. N(6)-(1,2-dicarboxyethyl)-AMP is bound by residues Ser263, 268 to 270 (KKN), and 307 to 311 (SVERY).

This sequence belongs to the lyase 1 family. Adenylosuccinate lyase subfamily. In terms of assembly, homotetramer. Residues from neighboring subunits contribute catalytic and substrate-binding residues to each active site.

It carries out the reaction N(6)-(1,2-dicarboxyethyl)-AMP = fumarate + AMP. It catalyses the reaction (2S)-2-[5-amino-1-(5-phospho-beta-D-ribosyl)imidazole-4-carboxamido]succinate = 5-amino-1-(5-phospho-beta-D-ribosyl)imidazole-4-carboxamide + fumarate. It functions in the pathway purine metabolism; AMP biosynthesis via de novo pathway; AMP from IMP: step 2/2. It participates in purine metabolism; IMP biosynthesis via de novo pathway; 5-amino-1-(5-phospho-D-ribosyl)imidazole-4-carboxamide from 5-amino-1-(5-phospho-D-ribosyl)imidazole-4-carboxylate: step 2/2. In terms of biological role, catalyzes two reactions in de novo purine nucleotide biosynthesis. Catalyzes the breakdown of 5-aminoimidazole- (N-succinylocarboxamide) ribotide (SAICAR or 2-[5-amino-1-(5-phospho-beta-D-ribosyl)imidazole-4-carboxamido]succinate) to 5-aminoimidazole-4-carboxamide ribotide (AICAR or 5-amino-1-(5-phospho-beta-D-ribosyl)imidazole-4-carboxamide) and fumarate, and of adenylosuccinate (ADS or N(6)-(1,2-dicarboxyethyl)-AMP) to adenosine monophosphate (AMP) and fumarate. This chain is Adenylosuccinate lyase (purB), found in Thermotoga maritima (strain ATCC 43589 / DSM 3109 / JCM 10099 / NBRC 100826 / MSB8).